Reading from the N-terminus, the 570-residue chain is Cation/calcium exchanger 1 (570 aa).

Helical transmembrane passes span 14–34, 97–117, 141–161, 176–196, 212–232, 235–255, 344–364, 371–391, 401–421, 427–447, 479–499, 513–533, and 546–566; these read LSLL…ASQT, SPVL…YLLG, MAGV…SSVV, ILGG…VLIG, VFLL…KVTI, ALCY…SHFF, CAVV…CSHY, LILY…AYLT, FSLV…YMIA, LLIS…LTVL, YAGP…ISSL, SLLE…VIMP, and GLLA…FGVL.

It belongs to the Ca(2+):cation antiporter (CaCA) (TC 2.A.19) family. Cation/calcium exchanger (CCX) subfamily. As to expression, expressed in roots, leaves, stems and flowers.

It localises to the vacuole membrane. Functionally, vacuolar membrane-localized H(+)-dependent K(+) and Na(+) transporter. The protein is Cation/calcium exchanger 1 (CCX1) of Arabidopsis thaliana (Mouse-ear cress).